The chain runs to 429 residues: Glutamate-1-semialdehyde 2,1-aminomutase 2 (429 aa).

Lysine 267 carries the N6-(pyridoxal phosphate)lysine modification.

Belongs to the class-III pyridoxal-phosphate-dependent aminotransferase family. HemL subfamily. In terms of assembly, homodimer. Pyridoxal 5'-phosphate is required as a cofactor.

The protein localises to the cytoplasm. It carries out the reaction (S)-4-amino-5-oxopentanoate = 5-aminolevulinate. The protein operates within porphyrin-containing compound metabolism; protoporphyrin-IX biosynthesis; 5-aminolevulinate from L-glutamyl-tRNA(Glu): step 2/2. The polypeptide is Glutamate-1-semialdehyde 2,1-aminomutase 2 (gsaB) (Bacillus subtilis (strain 168)).